Consider the following 425-residue polypeptide: Serine hydroxymethyltransferase (425 aa).

(6S)-5,6,7,8-tetrahydrofolate contacts are provided by residues Leu-120 and 124–126; that span reads GHL. Lys-229 carries the post-translational modification N6-(pyridoxal phosphate)lysine. 353-355 is a (6S)-5,6,7,8-tetrahydrofolate binding site; sequence SPF.

The protein belongs to the SHMT family. In terms of assembly, homodimer. Pyridoxal 5'-phosphate is required as a cofactor.

It localises to the cytoplasm. The enzyme catalyses (6R)-5,10-methylene-5,6,7,8-tetrahydrofolate + glycine + H2O = (6S)-5,6,7,8-tetrahydrofolate + L-serine. It participates in one-carbon metabolism; tetrahydrofolate interconversion. It functions in the pathway amino-acid biosynthesis; glycine biosynthesis; glycine from L-serine: step 1/1. Functionally, catalyzes the reversible interconversion of serine and glycine with tetrahydrofolate (THF) serving as the one-carbon carrier. This reaction serves as the major source of one-carbon groups required for the biosynthesis of purines, thymidylate, methionine, and other important biomolecules. Also exhibits THF-independent aldolase activity toward beta-hydroxyamino acids, producing glycine and aldehydes, via a retro-aldol mechanism. The protein is Serine hydroxymethyltransferase of Thermosynechococcus vestitus (strain NIES-2133 / IAM M-273 / BP-1).